Consider the following 306-residue polypeptide: B- and T-lymphocyte attenuator (306 aa).

An N-terminal signal peptide occupies residues 1–29 (MKTVPAMLGTPRLFREFFILHLGLWSILC). Residues 30–183 (EKATKRNDEE…ERPGRTWLLY (154 aa)) are Extracellular-facing. In terms of domain architecture, Ig-like V-type spans 37–139 (DEECPVQLTI…SQVINSHSVT (103 aa)). Intrachain disulfides connect C40–C69, C64–C124, and C78–C85. N-linked (GlcNAc...) asparagine glycans are attached at residues N74, N81, N101, N119, N148, and N165. A helical transmembrane segment spans residues 184 to 204 (TLLPLGALLLLLACVCLLCFL). The Cytoplasmic portion of the chain corresponds to 205–306 (KRIQGKEKKP…TEYASICVRS (102 aa)).

In terms of assembly, interacts with tyrosine phosphatases PTPN6/SHP-1 and PTPN11/SHP-2. Interacts with TNFRSF14/HVEM (via cysteine-rich domain 1). In terms of processing, phosphorylated on Tyr residues by TNFRSF14 and by antigen receptors cross-linking, both inducing association with PTPN6 and PTPN11. N-glycosylated. Expressed in splenic T- and B-cells as well as lymph node tissues but very weakly in somatic tissues. Also expressed in macrophages, NK cells and dendritic cells. A polymorphic tissue distribution between several strains is seen.

It localises to the cell membrane. Its function is as follows. Inhibitory receptor on lymphocytes that negatively regulates antigen receptor signaling via PTPN6/SHP-1 and PTPN11/SHP-2. May interact in cis (on the same cell) or in trans (on other cells) with TNFRSF14. In cis interactions, appears to play an immune regulatory role inhibiting in trans interactions in naive T cells to maintain a resting state. In trans interactions, can predominate during adaptive immune response to provide survival signals to effector T cells. The chain is B- and T-lymphocyte attenuator from Mus musculus (Mouse).